We begin with the raw amino-acid sequence, 199 residues long: 7-methyl-GTP pyrophosphatase (199 aa).

Residue aspartate 72 is the Proton acceptor of the active site.

Belongs to the Maf family. YceF subfamily. Requires a divalent metal cation as cofactor.

It is found in the cytoplasm. The catalysed reaction is N(7)-methyl-GTP + H2O = N(7)-methyl-GMP + diphosphate + H(+). Its function is as follows. Nucleoside triphosphate pyrophosphatase that hydrolyzes 7-methyl-GTP (m(7)GTP). May have a dual role in cell division arrest and in preventing the incorporation of modified nucleotides into cellular nucleic acids. This Alkalilimnicola ehrlichii (strain ATCC BAA-1101 / DSM 17681 / MLHE-1) protein is 7-methyl-GTP pyrophosphatase.